The primary structure comprises 303 residues: Aspartate carbamoyltransferase catalytic subunit (303 aa).

Carbamoyl phosphate contacts are provided by arginine 51 and threonine 52. L-aspartate is bound at residue lysine 80. Residues arginine 101, histidine 129, and glutamine 132 each coordinate carbamoyl phosphate. L-aspartate-binding residues include arginine 162 and arginine 221. Residues leucine 260 and proline 261 each contribute to the carbamoyl phosphate site.

Belongs to the aspartate/ornithine carbamoyltransferase superfamily. ATCase family. As to quaternary structure, heterooligomer of catalytic and regulatory chains.

It catalyses the reaction carbamoyl phosphate + L-aspartate = N-carbamoyl-L-aspartate + phosphate + H(+). It participates in pyrimidine metabolism; UMP biosynthesis via de novo pathway; (S)-dihydroorotate from bicarbonate: step 2/3. Functionally, catalyzes the condensation of carbamoyl phosphate and aspartate to form carbamoyl aspartate and inorganic phosphate, the committed step in the de novo pyrimidine nucleotide biosynthesis pathway. This is Aspartate carbamoyltransferase catalytic subunit from Saccharolobus islandicus (strain M.14.25 / Kamchatka #1) (Sulfolobus islandicus).